Reading from the N-terminus, the 93-residue chain is Putative hemolysin E-like protein (93 aa).

The protein belongs to the hemolysin E family.

In Escherichia coli O6:H1 (strain CFT073 / ATCC 700928 / UPEC), this protein is Putative hemolysin E-like protein.